The following is a 535-amino-acid chain: Beta-amylase (535 aa).

Substrate-binding residues include aspartate 51, histidine 91, and aspartate 99. The active-site Proton donor is the glutamate 184. 3 residues coordinate substrate: lysine 293, histidine 298, and threonine 340. Residue glutamate 378 is the Proton acceptor of the active site. Substrate is bound by residues 379–380 (NA) and arginine 418. 3 consecutive repeat copies span residues 489–499 (GPTGGMGGQAE), 500–510 (GPTCGMGGQVK), and 511–521 (GPTGGMGGQAE). The tract at residues 489-532 (GPTGGMGGQAEGPTCGMGGQVKGPTGGMGGQAEDPTSGIGGELP) is 4 X 11 AA tandem repeats. Positions 513 to 535 (TGGMGGQAEDPTSGIGGELPATM) are disordered. A 4; approximate repeat occupies 522–532 (DPTSGIGGELP).

The protein belongs to the glycosyl hydrolase 14 family. As to quaternary structure, monomer.

It carries out the reaction Hydrolysis of (1-&gt;4)-alpha-D-glucosidic linkages in polysaccharides so as to remove successive maltose units from the non-reducing ends of the chains.. The protein is Beta-amylase (BMY1) of Hordeum vulgare (Barley).